Reading from the N-terminus, the 314-residue chain is Homoserine kinase (314 aa).

96-106 (PIGSGLGSSAC) lines the ATP pocket.

This sequence belongs to the GHMP kinase family. Homoserine kinase subfamily.

The protein localises to the cytoplasm. It carries out the reaction L-homoserine + ATP = O-phospho-L-homoserine + ADP + H(+). It participates in amino-acid biosynthesis; L-threonine biosynthesis; L-threonine from L-aspartate: step 4/5. Functionally, catalyzes the ATP-dependent phosphorylation of L-homoserine to L-homoserine phosphate. The protein is Homoserine kinase of Mannheimia succiniciproducens (strain KCTC 0769BP / MBEL55E).